A 117-amino-acid chain; its full sequence is uncharacterized protein (117 aa).

This is an uncharacterized protein from Rattus norvegicus (Rat).